A 620-amino-acid polypeptide reads, in one-letter code: Zinc metalloproteinase-disintegrin-like ACLD (620 aa).

The signal sequence occupies residues 1–20; sequence MIQVLLVTLCLAVFPYQGSS. A propeptide spanning residues 21–189 is cleaved from the precursor; sequence IILESGNVND…KKASQLNLTP (169 aa). One can recognise a Peptidase M12B domain in the interval 199-395; it reads KYVEFVVVLD…RRPKCILNEP (197 aa). Residue Glu202 participates in Ca(2+) binding. N-linked (GlcNAc...) asparagine glycosylation is found at Asn259 and Asn265. Asp286 contacts Ca(2+). Disulfide bonds link Cys310–Cys390, Cys350–Cys374, and Cys352–Cys357. Zn(2+) is bound at residue His335. The active site involves Glu336. Residues His339 and His345 each coordinate Zn(2+). N-linked (GlcNAc...) asparagine glycosylation occurs at Asn373. 2 residues coordinate Ca(2+): Cys390 and Asn393. An N-linked (GlcNAc...) asparagine glycan is attached at Asn396. Residues 403–489 form the Disintegrin domain; sequence PPVCGNELLE…ECPTDRFQRN (87 aa). 6 residues coordinate Ca(2+): Val405, Asn408, Leu410, Glu412, Glu415, and Asp418. Intrachain disulfides connect Cys406–Cys435, Cys417–Cys430, Cys419–Cys425, Cys429–Cys452, Cys443–Cys449, Cys448–Cys474, Cys461–Cys481, Cys468–Cys500, Cys493–Cys505, Cys512–Cys562, Cys527–Cys573, Cys540–Cys550, Cys557–Cys599, and Cys593–Cys604. The D/ECD-tripeptide signature appears at 467-469; the sequence is DCD. Asn502 and Asn536 each carry an N-linked (GlcNAc...) asparagine glycan.

This sequence belongs to the venom metalloproteinase (M12B) family. P-III subfamily. P-IIIa sub-subfamily. In terms of assembly, monomer. Requires Zn(2+) as cofactor. Expressed by the venom gland.

The protein localises to the secreted. With respect to regulation, inhibited by EDTA and O-phenanthroline. Not inhibited by PMSF, benzamidine, irreversible serine-proteinase inhibitors and cysteine proteinase inhibitor E-64. Is a potent activator of prothrombin (F2). Does not elicit any hemorrhagic response. Barely inhibits collagen-induced platelet aggregation. Binds neither collagen, nor the jararhagin-monoclonal antibody MAJar3. Hydrolyzes the Aalpha-chain of fibrin and fibrinogen, without affecting the Bbeta- and gamma-chains. Is capable of triggering endothelial pro-inflammatory and procoagulant cell responses, but fails to trigger apoptosis. Induces von Willebrand factor release, and the expression of both ICAM1 and E-selectin (SELE) (without increase in VCAM1) in endothelial cells (HUVEC). Is also able to up-regulate the synthesis of the coagulation factor TF (F3). Enhances nitric oxide (NO) generation, prostacyclin production and interleukin-8 release. The sequence is that of Zinc metalloproteinase-disintegrin-like ACLD from Agkistrodon contortrix laticinctus (Broad-banded copperhead).